The following is a 33-amino-acid chain: Brevinin-2PTb (33 aa).

C27 and C33 are disulfide-bonded.

As to expression, expressed by the skin glands.

Its subcellular location is the secreted. Has antibacterial activity against the Gram-positive bacterium S.aureus ATCC 25923 (MIC=9 uM) and the Gram-negative bacterium E.coli ATCC 25726 (MIC=9 uM). In Pulchrana picturata (Malaysian fire frog), this protein is Brevinin-2PTb.